Consider the following 251-residue polypeptide: Flap endonuclease Xni (251 aa).

Mg(2+) is bound at residue Asp-104. Residues 160 to 249 (VLPRQLPDYW…IDGNLQQLRL (90 aa)) form the 5'-3' exonuclease domain. Residues Leu-171, Ala-172, Pro-180, Val-182, and Ile-185 each contribute to the K(+) site. The segment at 184–189 (GIGPKS) is interaction with DNA.

The protein belongs to the Xni family. It depends on Mg(2+) as a cofactor. K(+) is required as a cofactor.

Has flap endonuclease activity. During DNA replication, flap endonucleases cleave the 5'-overhanging flap structure that is generated by displacement synthesis when DNA polymerase encounters the 5'-end of a downstream Okazaki fragment. In Salmonella choleraesuis (strain SC-B67), this protein is Flap endonuclease Xni.